We begin with the raw amino-acid sequence, 72 residues long: Translation initiation factor IF-1 (72 aa).

The 72-residue stretch at 1–72 (MSKSDYIELE…TKGRIIFRHK (72 aa)) folds into the S1-like domain.

This sequence belongs to the IF-1 family. As to quaternary structure, component of the 30S ribosomal translation pre-initiation complex which assembles on the 30S ribosome in the order IF-2 and IF-3, IF-1 and N-formylmethionyl-tRNA(fMet); mRNA recruitment can occur at any time during PIC assembly.

The protein localises to the cytoplasm. One of the essential components for the initiation of protein synthesis. Stabilizes the binding of IF-2 and IF-3 on the 30S subunit to which N-formylmethionyl-tRNA(fMet) subsequently binds. Helps modulate mRNA selection, yielding the 30S pre-initiation complex (PIC). Upon addition of the 50S ribosomal subunit IF-1, IF-2 and IF-3 are released leaving the mature 70S translation initiation complex. The protein is Translation initiation factor IF-1 of Ruthia magnifica subsp. Calyptogena magnifica.